We begin with the raw amino-acid sequence, 55 residues long: Large ribosomal subunit protein bL33 (55 aa).

Belongs to the bacterial ribosomal protein bL33 family.

The polypeptide is Large ribosomal subunit protein bL33 (Renibacterium salmoninarum (strain ATCC 33209 / DSM 20767 / JCM 11484 / NBRC 15589 / NCIMB 2235)).